A 277-amino-acid polypeptide reads, in one-letter code: Large ribosomal subunit protein uL2 (277 aa).

2 disordered regions span residues 34–55 (LQPL…RHHG) and 213–277 (WKGI…RKKK).

The protein belongs to the universal ribosomal protein uL2 family. Part of the 50S ribosomal subunit. Forms a bridge to the 30S subunit in the 70S ribosome.

One of the primary rRNA binding proteins. Required for association of the 30S and 50S subunits to form the 70S ribosome, for tRNA binding and peptide bond formation. It has been suggested to have peptidyltransferase activity; this is somewhat controversial. Makes several contacts with the 16S rRNA in the 70S ribosome. This Staphylococcus haemolyticus (strain JCSC1435) protein is Large ribosomal subunit protein uL2.